The following is a 374-amino-acid chain: Chaperone protein DnaJ (374 aa).

The J domain occupies D5 to G70. The CR-type zinc-finger motif lies at G133–Y211. The Zn(2+) site is built by C146, C149, C163, C166, C185, C188, C199, and C202. CXXCXGXG motif repeat units lie at residues C146–G153, C163–G170, C185–G192, and C199–G206.

The protein belongs to the DnaJ family. As to quaternary structure, homodimer. Requires Zn(2+) as cofactor.

It is found in the cytoplasm. Functionally, participates actively in the response to hyperosmotic and heat shock by preventing the aggregation of stress-denatured proteins and by disaggregating proteins, also in an autonomous, DnaK-independent fashion. Unfolded proteins bind initially to DnaJ; upon interaction with the DnaJ-bound protein, DnaK hydrolyzes its bound ATP, resulting in the formation of a stable complex. GrpE releases ADP from DnaK; ATP binding to DnaK triggers the release of the substrate protein, thus completing the reaction cycle. Several rounds of ATP-dependent interactions between DnaJ, DnaK and GrpE are required for fully efficient folding. Also involved, together with DnaK and GrpE, in the DNA replication of plasmids through activation of initiation proteins. In Pseudomonas fluorescens (strain SBW25), this protein is Chaperone protein DnaJ.